A 337-amino-acid polypeptide reads, in one-letter code: Anthranilate phosphoribosyltransferase (337 aa).

Residues Gly81, Gly84 to Asp85, Ser89, Asn91 to Thr94, Lys109 to Ser117, and Ala121 each bind 5-phospho-alpha-D-ribose 1-diphosphate. Gly81 serves as a coordination point for anthranilate. Ser93 lines the Mg(2+) pocket. Asn112 provides a ligand contact to anthranilate. Arg167 serves as a coordination point for anthranilate. Mg(2+)-binding residues include Asp226 and Glu227.

This sequence belongs to the anthranilate phosphoribosyltransferase family. Homodimer. Mg(2+) serves as cofactor.

It carries out the reaction N-(5-phospho-beta-D-ribosyl)anthranilate + diphosphate = 5-phospho-alpha-D-ribose 1-diphosphate + anthranilate. The protein operates within amino-acid biosynthesis; L-tryptophan biosynthesis; L-tryptophan from chorismate: step 2/5. Its function is as follows. Catalyzes the transfer of the phosphoribosyl group of 5-phosphorylribose-1-pyrophosphate (PRPP) to anthranilate to yield N-(5'-phosphoribosyl)-anthranilate (PRA). In Bradyrhizobium diazoefficiens (strain JCM 10833 / BCRC 13528 / IAM 13628 / NBRC 14792 / USDA 110), this protein is Anthranilate phosphoribosyltransferase.